Consider the following 507-residue polypeptide: BPI fold-containing family C protein (507 aa).

A signal peptide spans 1 to 23; sequence MCTKTIPVLWGCFLLWNLYVSSS. 3 N-linked (GlcNAc...) asparagine glycosylation sites follow: Asn-79, Asn-92, and Asn-113. A disulfide bridge connects residues Cys-161 and Cys-200. Asn-213, Asn-225, Asn-257, Asn-301, Asn-355, Asn-372, and Asn-415 each carry an N-linked (GlcNAc...) asparagine glycan.

This sequence belongs to the BPI/LBP/Plunc superfamily. BPI/LBP family. In terms of tissue distribution, detected in the basal layer of the epidermis from inflammatory skin from psoriasis patients, but not in normal skin.

The protein localises to the secreted. This chain is BPI fold-containing family C protein (BPIFC), found in Homo sapiens (Human).